Consider the following 391-residue polypeptide: Putative 1-acyl-sn-glycerol-3-phosphate acyltransferase acl-12 (391 aa).

A run of 2 helical transmembrane segments spans residues 47–67 (FFFM…SLLF) and 84–104 (LCAM…ATVT). The HXXXXD motif motif lies at 124–129 (HLGLLD).

The protein belongs to the 1-acyl-sn-glycerol-3-phosphate acyltransferase family.

It localises to the membrane. The catalysed reaction is a 1-acyl-sn-glycero-3-phosphate + an acyl-CoA = a 1,2-diacyl-sn-glycero-3-phosphate + CoA. It functions in the pathway phospholipid metabolism; CDP-diacylglycerol biosynthesis; CDP-diacylglycerol from sn-glycerol 3-phosphate: step 2/3. Functionally, converts lysophosphatidic acid (LPA) into phosphatidic acid by incorporating an acyl moiety at the sn-2 position of the glycerol backbone. In Caenorhabditis elegans, this protein is Putative 1-acyl-sn-glycerol-3-phosphate acyltransferase acl-12 (acl-12).